Consider the following 334-residue polypeptide: Holliday junction branch migration complex subunit RuvB (334 aa).

Residues 1-182 (MNERMVDQSM…FGVHLRLEYY (182 aa)) form a large ATPase domain (RuvB-L) region. ATP contacts are provided by residues Leu-21, Arg-22, Gly-63, Lys-66, Thr-67, Thr-68, 129–131 (EDF), Arg-172, Tyr-182, and Arg-219. Mg(2+) is bound at residue Thr-67. The interval 183-253 (NESDLKEIII…TTKHALGLLQ (71 aa)) is small ATPAse domain (RuvB-S). The tract at residues 256-334 (QHGLDYIDHK…HFAKSNEERE (79 aa)) is head domain (RuvB-H). Arg-292, Arg-311, and Arg-316 together coordinate DNA.

Belongs to the RuvB family. In terms of assembly, homohexamer. Forms an RuvA(8)-RuvB(12)-Holliday junction (HJ) complex. HJ DNA is sandwiched between 2 RuvA tetramers; dsDNA enters through RuvA and exits via RuvB. An RuvB hexamer assembles on each DNA strand where it exits the tetramer. Each RuvB hexamer is contacted by two RuvA subunits (via domain III) on 2 adjacent RuvB subunits; this complex drives branch migration. In the full resolvosome a probable DNA-RuvA(4)-RuvB(12)-RuvC(2) complex forms which resolves the HJ.

The protein resides in the cytoplasm. It catalyses the reaction ATP + H2O = ADP + phosphate + H(+). In terms of biological role, the RuvA-RuvB-RuvC complex processes Holliday junction (HJ) DNA during genetic recombination and DNA repair, while the RuvA-RuvB complex plays an important role in the rescue of blocked DNA replication forks via replication fork reversal (RFR). RuvA specifically binds to HJ cruciform DNA, conferring on it an open structure. The RuvB hexamer acts as an ATP-dependent pump, pulling dsDNA into and through the RuvAB complex. RuvB forms 2 homohexamers on either side of HJ DNA bound by 1 or 2 RuvA tetramers; 4 subunits per hexamer contact DNA at a time. Coordinated motions by a converter formed by DNA-disengaged RuvB subunits stimulates ATP hydrolysis and nucleotide exchange. Immobilization of the converter enables RuvB to convert the ATP-contained energy into a lever motion, pulling 2 nucleotides of DNA out of the RuvA tetramer per ATP hydrolyzed, thus driving DNA branch migration. The RuvB motors rotate together with the DNA substrate, which together with the progressing nucleotide cycle form the mechanistic basis for DNA recombination by continuous HJ branch migration. Branch migration allows RuvC to scan DNA until it finds its consensus sequence, where it cleaves and resolves cruciform DNA. This chain is Holliday junction branch migration complex subunit RuvB, found in Staphylococcus aureus (strain MRSA252).